The primary structure comprises 221 residues: Cytidylate kinase 1 (221 aa).

Residue 7-15 participates in ATP binding; sequence GPSASGKSS.

This sequence belongs to the cytidylate kinase family. Type 1 subfamily.

It localises to the cytoplasm. The catalysed reaction is CMP + ATP = CDP + ADP. It catalyses the reaction dCMP + ATP = dCDP + ADP. This Borrelia garinii subsp. bavariensis (strain ATCC BAA-2496 / DSM 23469 / PBi) (Borreliella bavariensis) protein is Cytidylate kinase 1.